Consider the following 300-residue polypeptide: Apolipoprotein E (300 aa).

The first 18 residues, 1–18 (MKVLWAVLVVTLLAGCQA), serve as a signal peptide directing secretion. The interval 74 to 246 (VLMEDTMKEV…RLDEVREQME (173 aa)) is 8 X 22 AA approximate tandem repeats. 8 repeat units span residues 75–95 (LMEDTMKEVKAYKSELEQELA), 96–117 (PMAEETKARLSKELKAAQARLG), 118–139 (ADMEEVRNRLSQYRGEVQSMLG), 140–161 (HSAEELRARLATHLRKLRKRLL), 162–183 (RDAEDLQKRLAVYKAGASEGAE), 184–205 (RSVSAIRERLGSLVEQGRLRTA), 206–224 (ALTSQPLQERAQAWGERLR), and 225–243 (GRLEEVGSKARDRLDEVRE). Residue M137 is modified to Methionine sulfoxide. S141 is modified (phosphoserine). The LDL and other lipoprotein receptors binding stretch occupies residues 152 to 162 (HLRKLRKRLLR). 156–159 (LRKR) provides a ligand contact to heparin. The segment at 204-274 (TAALTSQPLQ…GWFEPMMEDI (71 aa)) is lipid-binding and lipoprotein association. 220 to 227 (GERLRGRL) lines the heparin pocket. The interval 262–274 (RLKGWFEPMMEDI) is specificity for association with VLDL.

This sequence belongs to the apolipoprotein A1/A4/E family. In terms of assembly, homotetramer. May interact with ABCA1; functionally associated with ABCA1 in the biogenesis of HDLs. May interact with APP/A4 amyloid-beta peptide; the interaction is extremely stable in vitro but its physiological significance is unclear. May interact with MAPT. May interact with MAP2. In the cerebrospinal fluid, interacts with secreted SORL1. Interacts with PMEL; this allows the loading of PMEL luminal fragment on ILVs to induce fibril nucleation. Post-translationally, APOE exists as multiple glycosylated and sialylated glycoforms within cells and in plasma. The extent of glycosylation and sialylation are tissue and context specific. In terms of processing, glycated in plasma VLDL. Phosphorylated by FAM20C in the extracellular medium.

It localises to the secreted. The protein localises to the extracellular space. The protein resides in the extracellular matrix. It is found in the extracellular vesicle. Its subcellular location is the endosome. It localises to the multivesicular body. APOE is an apolipoprotein, a protein associating with lipid particles, that mainly functions in lipoprotein-mediated lipid transport between organs via the plasma and interstitial fluids. APOE is a core component of plasma lipoproteins and is involved in their production, conversion and clearance. Apolipoproteins are amphipathic molecules that interact both with lipids of the lipoprotein particle core and the aqueous environment of the plasma. As such, APOE associates with chylomicrons, chylomicron remnants, very low density lipoproteins (VLDL) and intermediate density lipoproteins (IDL) but shows a preferential binding to high-density lipoproteins (HDL). It also binds a wide range of cellular receptors including the LDL receptor/LDLR, the LDL receptor-related proteins LRP1, LRP2 and LRP8 and the very low-density lipoprotein receptor/VLDLR that mediate the cellular uptake of the APOE-containing lipoprotein particles. Finally, APOE also has a heparin-binding activity and binds heparan-sulfate proteoglycans on the surface of cells, a property that supports the capture and the receptor-mediated uptake of APOE-containing lipoproteins by cells. A main function of APOE is to mediate lipoprotein clearance through the uptake of chylomicrons, VLDLs, and HDLs by hepatocytes. APOE is also involved in the biosynthesis by the liver of VLDLs as well as their uptake by peripheral tissues ensuring the delivery of triglycerides and energy storage in muscle, heart and adipose tissues. By participating in the lipoprotein-mediated distribution of lipids among tissues, APOE plays a critical role in plasma and tissues lipid homeostasis. APOE is also involved in two steps of reverse cholesterol transport, the HDLs-mediated transport of cholesterol from peripheral tissues to the liver, and thereby plays an important role in cholesterol homeostasis. First, it is functionally associated with ABCA1 in the biogenesis of HDLs in tissues. Second, it is enriched in circulating HDLs and mediates their uptake by hepatocytes. APOE also plays an important role in lipid transport in the central nervous system, regulating neuron survival and sprouting. The sequence is that of Apolipoprotein E (APOE) from Dinomys branickii (Pacarana).